We begin with the raw amino-acid sequence, 456 residues long: Bifunctional protein GlmU (456 aa).

Residues 1–229 (MLNNAMSVVI…LSEVEGVNNR (229 aa)) are pyrophosphorylase. UDP-N-acetyl-alpha-D-glucosamine contacts are provided by residues 11–14 (LAAG), lysine 25, glutamine 76, 81–82 (GT), 103–105 (YGD), glycine 140, glutamate 154, asparagine 169, and asparagine 227. Position 105 (aspartate 105) interacts with Mg(2+). Asparagine 227 is a Mg(2+) binding site. The linker stretch occupies residues 230-250 (LQLSRLERVYQSEQAEKLLLA). The segment at 251 to 456 (GVMLRDPARF…EGWRRPVKKK (206 aa)) is N-acetyltransferase. 2 residues coordinate UDP-N-acetyl-alpha-D-glucosamine: arginine 333 and lysine 351. Histidine 363 functions as the Proton acceptor in the catalytic mechanism. UDP-N-acetyl-alpha-D-glucosamine contacts are provided by tyrosine 366 and asparagine 377. Residues alanine 380, 386–387 (NY), serine 405, alanine 423, and arginine 440 each bind acetyl-CoA.

The protein in the N-terminal section; belongs to the N-acetylglucosamine-1-phosphate uridyltransferase family. It in the C-terminal section; belongs to the transferase hexapeptide repeat family. Homotrimer. The cofactor is Mg(2+).

It is found in the cytoplasm. It carries out the reaction alpha-D-glucosamine 1-phosphate + acetyl-CoA = N-acetyl-alpha-D-glucosamine 1-phosphate + CoA + H(+). The enzyme catalyses N-acetyl-alpha-D-glucosamine 1-phosphate + UTP + H(+) = UDP-N-acetyl-alpha-D-glucosamine + diphosphate. The protein operates within nucleotide-sugar biosynthesis; UDP-N-acetyl-alpha-D-glucosamine biosynthesis; N-acetyl-alpha-D-glucosamine 1-phosphate from alpha-D-glucosamine 6-phosphate (route II): step 2/2. It participates in nucleotide-sugar biosynthesis; UDP-N-acetyl-alpha-D-glucosamine biosynthesis; UDP-N-acetyl-alpha-D-glucosamine from N-acetyl-alpha-D-glucosamine 1-phosphate: step 1/1. It functions in the pathway bacterial outer membrane biogenesis; LPS lipid A biosynthesis. Functionally, catalyzes the last two sequential reactions in the de novo biosynthetic pathway for UDP-N-acetylglucosamine (UDP-GlcNAc). The C-terminal domain catalyzes the transfer of acetyl group from acetyl coenzyme A to glucosamine-1-phosphate (GlcN-1-P) to produce N-acetylglucosamine-1-phosphate (GlcNAc-1-P), which is converted into UDP-GlcNAc by the transfer of uridine 5-monophosphate (from uridine 5-triphosphate), a reaction catalyzed by the N-terminal domain. The sequence is that of Bifunctional protein GlmU from Escherichia coli (strain 55989 / EAEC).